The chain runs to 188 residues: Large ribosomal subunit protein uL5 (188 aa).

This sequence belongs to the universal ribosomal protein uL5 family. Part of the 50S ribosomal subunit; part of the 5S rRNA/L5/L18/L25 subcomplex. Contacts the 5S rRNA and the P site tRNA. Forms a bridge to the 30S subunit in the 70S ribosome.

Its function is as follows. This is one of the proteins that bind and probably mediate the attachment of the 5S RNA into the large ribosomal subunit, where it forms part of the central protuberance. In the 70S ribosome it contacts protein S13 of the 30S subunit (bridge B1b), connecting the 2 subunits; this bridge is implicated in subunit movement. Contacts the P site tRNA; the 5S rRNA and some of its associated proteins might help stabilize positioning of ribosome-bound tRNAs. The protein is Large ribosomal subunit protein uL5 of Aquifex pyrophilus.